A 187-amino-acid polypeptide reads, in one-letter code: Ribosome-recycling factor (187 aa).

Belongs to the RRF family.

The protein resides in the cytoplasm. In terms of biological role, responsible for the release of ribosomes from messenger RNA at the termination of protein biosynthesis. May increase the efficiency of translation by recycling ribosomes from one round of translation to another. The polypeptide is Ribosome-recycling factor (Xanthobacter autotrophicus (strain ATCC BAA-1158 / Py2)).